Consider the following 290-residue polypeptide: ATP synthase gamma chain (290 aa).

It belongs to the ATPase gamma chain family. As to quaternary structure, F-type ATPases have 2 components, CF(1) - the catalytic core - and CF(0) - the membrane proton channel. CF(1) has five subunits: alpha(3), beta(3), gamma(1), delta(1), epsilon(1). CF(0) has four main subunits: a, b, b' and c.

The protein resides in the cellular chromatophore membrane. Its function is as follows. Produces ATP from ADP in the presence of a proton gradient across the membrane. The gamma chain is believed to be important in regulating ATPase activity and the flow of protons through the CF(0) complex. This is ATP synthase gamma chain from Rhodobacter capsulatus (Rhodopseudomonas capsulata).